Consider the following 388-residue polypeptide: Chorismate synthase (388 aa).

NADP(+) contacts are provided by arginine 39 and arginine 45. FMN contacts are provided by residues 130 to 132 (RSS), 251 to 252 (NA), glycine 296, 311 to 315 (KPIPT), and arginine 337.

Belongs to the chorismate synthase family. As to quaternary structure, homotetramer. FMNH2 serves as cofactor.

It carries out the reaction 5-O-(1-carboxyvinyl)-3-phosphoshikimate = chorismate + phosphate. Its pathway is metabolic intermediate biosynthesis; chorismate biosynthesis; chorismate from D-erythrose 4-phosphate and phosphoenolpyruvate: step 7/7. Its function is as follows. Catalyzes the anti-1,4-elimination of the C-3 phosphate and the C-6 proR hydrogen from 5-enolpyruvylshikimate-3-phosphate (EPSP) to yield chorismate, which is the branch point compound that serves as the starting substrate for the three terminal pathways of aromatic amino acid biosynthesis. This reaction introduces a second double bond into the aromatic ring system. The protein is Chorismate synthase of Streptococcus pyogenes serotype M49 (strain NZ131).